The chain runs to 971 residues: Nucleolar protein dao-5 (971 aa).

Disordered regions lie at residues 61–926 (RIAS…QWGQ) and 938–971 (KAFRHEKTKKKKGSYGGGPINQSINSIKFSDSDD). Positions 134–150 (KKPAQTPAQKKAASSSD) are enriched in low complexity. Residues 180-190 (SDSDSDSEDSD) show a composition bias toward acidic residues. 17 stretches are compositionally biased toward low complexity: residues 264 to 275 (AKPAPAKATPKP), 294 to 304 (KKTPAKAAPKP), 324 to 335 (AKPTPAKATPKP), 355 to 366 (AKPAPAKATPKP), 386 to 397 (AKPTPAKATPKP), 417 to 428 (AKPTSAKATPKP), 447 to 457 (KKTPAKAAPKP), 476 to 498 (AKSTPAKITPKPTAKKVASSSSD), 508 to 519 (AKPTPANATPKP), 539 to 550 (AKPTSAKATPKP), 569 to 579 (KKTPAKAAPKP), 598 to 620 (AKSTPAKTTPKPTAKKAASSSSD), 630 to 641 (AKPTSAKATPKP), 691 to 712 (KATPVKVTPKSVTKKAAASSSD), 751 to 761 (AKPTPKATPKQ), 780 to 791 (KKTPAKSTPAKT), and 815 to 825 (ATTPAKSTPKT). Positions 907–921 (SVSEKFRNNQHDSHF) are enriched in basic and acidic residues. Basic residues predominate over residues 939–950 (AFRHEKTKKKKG). Residues 957 to 971 (INQSINSIKFSDSDD) are compositionally biased toward polar residues.

The protein belongs to the NOLC1 family. As to quaternary structure, may form dimers. Interacts with RNA polymerase I. As to expression, expressed in the nerve ring and hypodermal tissues. Expressed in the intestine. Expressed in the germline.

It localises to the nucleus. The protein resides in the nucleolus. It is found in the nucleoplasm. In terms of biological role, nucleolar protein which binds to RNA polymerase I and rDNA and is required for efficient RNA polymerase I-mediated rDNA transcription. Maintains the epigenetically active status of rDNA chromatin which facilitates rDNA transcription and sustains germline development, ensuring fertility. Plays a role in the modulation of nucleolus size. May play a role in the regulation of lifespan. The protein is Nucleolar protein dao-5 of Caenorhabditis elegans.